The sequence spans 354 residues: Holliday junction branch migration complex subunit RuvB (354 aa).

The large ATPase domain (RuvB-L) stretch occupies residues 4-198 (TTDYGASNTG…FGFTAHLDFY (195 aa)). Residues leucine 37, arginine 38, glycine 79, lysine 82, threonine 83, threonine 84, 145 to 147 (EDF), arginine 188, tyrosine 198, and arginine 235 contribute to the ATP site. Threonine 83 is a Mg(2+) binding site. Residues 199–269 (PHEELEKLIE…DVKEALALYQ (71 aa)) form a small ATPAse domain (RuvB-S) region. A head domain (RuvB-H) region spans residues 272–354 (SEGLDRLDIA…TPKDDVSKLF (83 aa)). DNA contacts are provided by arginine 327 and arginine 332.

Belongs to the RuvB family. As to quaternary structure, homohexamer. Forms an RuvA(8)-RuvB(12)-Holliday junction (HJ) complex. HJ DNA is sandwiched between 2 RuvA tetramers; dsDNA enters through RuvA and exits via RuvB. An RuvB hexamer assembles on each DNA strand where it exits the tetramer. Each RuvB hexamer is contacted by two RuvA subunits (via domain III) on 2 adjacent RuvB subunits; this complex drives branch migration. In the full resolvosome a probable DNA-RuvA(4)-RuvB(12)-RuvC(2) complex forms which resolves the HJ.

The protein localises to the cytoplasm. It carries out the reaction ATP + H2O = ADP + phosphate + H(+). In terms of biological role, the RuvA-RuvB-RuvC complex processes Holliday junction (HJ) DNA during genetic recombination and DNA repair, while the RuvA-RuvB complex plays an important role in the rescue of blocked DNA replication forks via replication fork reversal (RFR). RuvA specifically binds to HJ cruciform DNA, conferring on it an open structure. The RuvB hexamer acts as an ATP-dependent pump, pulling dsDNA into and through the RuvAB complex. RuvB forms 2 homohexamers on either side of HJ DNA bound by 1 or 2 RuvA tetramers; 4 subunits per hexamer contact DNA at a time. Coordinated motions by a converter formed by DNA-disengaged RuvB subunits stimulates ATP hydrolysis and nucleotide exchange. Immobilization of the converter enables RuvB to convert the ATP-contained energy into a lever motion, pulling 2 nucleotides of DNA out of the RuvA tetramer per ATP hydrolyzed, thus driving DNA branch migration. The RuvB motors rotate together with the DNA substrate, which together with the progressing nucleotide cycle form the mechanistic basis for DNA recombination by continuous HJ branch migration. Branch migration allows RuvC to scan DNA until it finds its consensus sequence, where it cleaves and resolves cruciform DNA. The chain is Holliday junction branch migration complex subunit RuvB from Bifidobacterium longum (strain NCC 2705).